The chain runs to 84 residues: Large ribosomal subunit protein bL31B (84 aa).

Belongs to the bacterial ribosomal protein bL31 family. Type B subfamily. As to quaternary structure, part of the 50S ribosomal subunit.

In terms of biological role, binds the 23S rRNA. The sequence is that of Large ribosomal subunit protein bL31B from Rhodococcus jostii (strain RHA1).